A 196-amino-acid chain; its full sequence is UPF0215 protein MA_4269 (196 aa).

The protein belongs to the UPF0215 family.

This is UPF0215 protein MA_4269 from Methanosarcina acetivorans (strain ATCC 35395 / DSM 2834 / JCM 12185 / C2A).